The chain runs to 74 residues: uncharacterized protein (74 aa).

To U.parvum UU416.

This is an uncharacterized protein from Mycoplasma pneumoniae (strain ATCC 29342 / M129 / Subtype 1) (Mycoplasmoides pneumoniae).